The sequence spans 519 residues: Sensor protein RprX (519 aa).

Transmembrane regions (helical) follow at residues Thr5–Val25 and Ile260–Val280. Residues Asn296–Lys517 form the Histidine kinase domain. At His299 the chain carries Phosphohistidine; by autocatalysis.

The protein resides in the cell membrane. It carries out the reaction ATP + protein L-histidine = ADP + protein N-phospho-L-histidine.. Member of the two-component regulatory system RprX/RprY. May activate RprY by phosphorylation. The protein is Sensor protein RprX (rprX) of Bacteroides fragilis (strain YCH46).